The sequence spans 283 residues: Nucleoid occlusion protein (283 aa).

The H-T-H motif DNA-binding region spans 148–167; the sequence is EALAQRLGKGQSTIANKLRL.

The protein belongs to the ParB family.

The protein localises to the cytoplasm. It is found in the nucleoid. Effects nucleoid occlusion by binding relatively nonspecifically to DNA and preventing the assembly of the division machinery in the vicinity of the nucleoid, especially under conditions that disturb the cell cycle. It helps to coordinate cell division and chromosome segregation by preventing the formation of the Z ring through the nucleoid, which would cause chromosome breakage. This Bacillus subtilis (strain 168) protein is Nucleoid occlusion protein (noc).